We begin with the raw amino-acid sequence, 82 residues long: Probable [Fe-S]-dependent transcriptional repressor (82 aa).

Residues cysteine 56, cysteine 61, cysteine 64, and cysteine 71 each contribute to the iron-sulfur cluster site.

It belongs to the FeoC family.

May function as a transcriptional regulator that controls feoABC expression. In Yersinia enterocolitica serotype O:8 / biotype 1B (strain NCTC 13174 / 8081), this protein is Probable [Fe-S]-dependent transcriptional repressor.